The sequence spans 105 residues: MNKIRKGDEVVVLAGKDRGRRGAVLRRVDDERVVVEGVNRVKKHVRPNPLKGEVGGIVEKEMPIHVSNVALFNPAAQKADRVGIKVLEDGRKVRFFKSNGELVDA.

The protein belongs to the universal ribosomal protein uL24 family. Part of the 50S ribosomal subunit.

In terms of biological role, one of two assembly initiator proteins, it binds directly to the 5'-end of the 23S rRNA, where it nucleates assembly of the 50S subunit. Functionally, one of the proteins that surrounds the polypeptide exit tunnel on the outside of the subunit. The protein is Large ribosomal subunit protein uL24 of Azoarcus sp. (strain BH72).